The following is an 84-amino-acid chain: Large ribosomal subunit protein bL27 (84 aa).

The protein belongs to the bacterial ribosomal protein bL27 family.

The chain is Large ribosomal subunit protein bL27 from Buchnera aphidicola subsp. Acyrthosiphon pisum (strain Tuc7).